The primary structure comprises 315 residues: Transcription antitermination protein NusB (315 aa).

A disordered region spans residues Ser296–Asp315. Residues Lys302–Asp315 show a composition bias toward basic and acidic residues.

Belongs to the NusB family.

Its function is as follows. Involved in transcription antitermination. Required for transcription of ribosomal RNA (rRNA) genes. Binds specifically to the boxA antiterminator sequence of the ribosomal RNA (rrn) operons. In Psychrobacter cryohalolentis (strain ATCC BAA-1226 / DSM 17306 / VKM B-2378 / K5), this protein is Transcription antitermination protein NusB.